Consider the following 767-residue polypeptide: Probable beta-D-xylosidase 7 (767 aa).

A signal peptide spans 1–19; it reads MAKQLLLLLLLFIVHGVES. Asparagine 100 carries an N-linked (GlcNAc...) asparagine glycan. Residue aspartate 292 is part of the active site. N-linked (GlcNAc...) asparagine glycosylation occurs at asparagine 643.

Belongs to the glycosyl hydrolase 3 family.

Its subcellular location is the secreted. The protein resides in the extracellular space. It is found in the extracellular matrix. The polypeptide is Probable beta-D-xylosidase 7 (BXL7) (Arabidopsis thaliana (Mouse-ear cress)).